The following is a 295-amino-acid chain: ATP synthase gamma chain (295 aa).

Belongs to the ATPase gamma chain family. In terms of assembly, F-type ATPases have 2 components, CF(1) - the catalytic core - and CF(0) - the membrane proton channel. CF(1) has five subunits: alpha(3), beta(3), gamma(1), delta(1), epsilon(1). CF(0) has three main subunits: a, b and c.

Its subcellular location is the cell membrane. Functionally, produces ATP from ADP in the presence of a proton gradient across the membrane. The gamma chain is believed to be important in regulating ATPase activity and the flow of protons through the CF(0) complex. The protein is ATP synthase gamma chain of Desulforudis audaxviator (strain MP104C).